The chain runs to 581 residues: Proline--tRNA ligase (581 aa).

Belongs to the class-II aminoacyl-tRNA synthetase family. ProS type 1 subfamily. In terms of assembly, homodimer.

Its subcellular location is the cytoplasm. The enzyme catalyses tRNA(Pro) + L-proline + ATP = L-prolyl-tRNA(Pro) + AMP + diphosphate. Functionally, catalyzes the attachment of proline to tRNA(Pro) in a two-step reaction: proline is first activated by ATP to form Pro-AMP and then transferred to the acceptor end of tRNA(Pro). As ProRS can inadvertently accommodate and process non-cognate amino acids such as alanine and cysteine, to avoid such errors it has two additional distinct editing activities against alanine. One activity is designated as 'pretransfer' editing and involves the tRNA(Pro)-independent hydrolysis of activated Ala-AMP. The other activity is designated 'posttransfer' editing and involves deacylation of mischarged Ala-tRNA(Pro). The misacylated Cys-tRNA(Pro) is not edited by ProRS. The sequence is that of Proline--tRNA ligase from Leptothrix cholodnii (strain ATCC 51168 / LMG 8142 / SP-6) (Leptothrix discophora (strain SP-6)).